The following is a 304-amino-acid chain: Protease HtpX homolog (304 aa).

2 consecutive transmembrane segments (helical) span residues 14 to 34 (IFIILGFFIFVLMVGAAIGII) and 39 to 59 (YLNGLILAAVIGAFYILIMVM). His-144 is a binding site for Zn(2+). The active site involves Glu-145. Position 148 (His-148) interacts with Zn(2+). A run of 2 helical transmembrane segments spans residues 159–179 (IAIALVAVIAILSDLAMRMIF) and 202–222 (AIIYIVALIFVILAPIIATAI). Glu-231 provides a ligand contact to Zn(2+).

This sequence belongs to the peptidase M48B family. Requires Zn(2+) as cofactor.

Its subcellular location is the cell membrane. The chain is Protease HtpX homolog from Listeria monocytogenes serotype 4b (strain CLIP80459).